Consider the following 403-residue polypeptide: MSTSTSPAAMLLRRLRRLSWGSTAVQLFILTVVTFGLLAPLACHRLLHSYFYLRHWHLNQMSQEFLQQSLKEGEAALHYFEELPSANGSVPIVWQATPRPWLVITIITVDRQPGFHYVLQVVSQFHRLLQQCGPQCEGHQLFLCNVERSVSHFDAKLLSKYVPVANRYEGTEDDYGDDPSTNSFEKEKQDYVYCLESSLQTYNPDYVLMVEDDAVPEEQIFPVLEHLLRARFSEPHLRDALYLKLYHPERLQHYTNPEPMRILEWVGVGMLLGPLLTWIYMRFASRPGFSWPVMLFFSLYSMGLVELVGRHYFLELRRLSPSLYSVVPASQCCTPAMLFPAPAARRTLTYLSQVYCHKGFGKDMALYSLLRAKGERAYVVEPNLVKHIGLFSSLRYNFHPSLL.

Over 1-22 the chain is Cytoplasmic; it reads MSTSTSPAAMLLRRLRRLSWGS. The chain crosses the membrane as a helical span at residues 23–43; that stretch reads TAVQLFILTVVTFGLLAPLAC. Residues 44–259 are Lumenal-facing; it reads HRLLHSYFYL…RLQHYTNPEP (216 aa). Valine 109 contacts UDP-N-acetyl-alpha-D-galactosamine. 2 disulfide bridges follow: cysteine 132/cysteine 136 and cysteine 144/cysteine 194. The DXD motif signature appears at 211–213; the sequence is EDD. The helical transmembrane segment at 260–280 threads the bilayer; it reads MRILEWVGVGMLLGPLLTWIY. Residues 281-287 are Cytoplasmic-facing; sequence MRFASRP. The helical transmembrane segment at 288-308 threads the bilayer; sequence GFSWPVMLFFSLYSMGLVELV. Residues 309-403 are Lumenal-facing; the sequence is GRHYFLELRR…LRYNFHPSLL (95 aa). Cysteine 332 and cysteine 333 are joined by a disulfide. UDP-N-acetyl-alpha-D-galactosamine-binding residues include threonine 334, proline 335, and lysine 362.

Belongs to the PGAP4 family. Post-translationally, glycosylated.

It localises to the golgi apparatus membrane. Its function is as follows. Golgi-resident glycosylphosphatidylinositol (GPI)-N-acetylgalactosamine transferase that catalyzes the N-acetyl-beta-D-galactosamine transfer from an UDP-N-acetyl-alpha-D-galactosamine to the 4-OH-position of first mannose of the glycosylphosphatidylinositol (GPI) of a GPI-anchored protein (GPI-AP). This modification occurs after the fatty acid remodeling step of the GPI-anchor maturation. This chain is GPI-N-acetylgalactosamine transferase PGAP4, found in Pongo abelii (Sumatran orangutan).